Consider the following 575-residue polypeptide: DNA polymerase lambda (575 aa).

The BRCT domain maps to E36–I132. Residues A160 to Q205 are disordered. Positions L166 to P178 are enriched in pro residues. Residues S194–E203 show a composition bias toward acidic residues. The tract at residues K265–Y279 is DNA-binding. The active-site Schiff-base intermediate with DNA is the K312. Positions G345 to T348 are DNA-binding. DCTP contacts are provided by residues R386, S417–R420, and G426–D429. Residues R420–D429 are involved in primer binding. The Mn(2+) site is built by D427, D429, and D490. The segment at E466–Y505 is DNA-binding. DCTP is bound at residue N513.

The protein belongs to the DNA polymerase type-X family. Interacts with PCNA. Interacts with PAXX; promoting POLL recruitment to double-strand breaks (DSBs) and stimulation of the end-filling activity of POLL. Interacts with XRCC4; promoting POLL recruitment to double-strand breaks (DSBs) and stimulation of the end-filling activity of POLL. Interacts with NHEJ1/XLF; promoting POLL recruitment to double-strand breaks (DSBs) and stimulation of the end-filling activity of POLL. Requires Mn(2+) as cofactor.

The protein localises to the nucleus. The catalysed reaction is DNA(n) + a 2'-deoxyribonucleoside 5'-triphosphate = DNA(n+1) + diphosphate. Its function is as follows. DNA polymerase that functions in several pathways of DNA repair. Involved in base excision repair (BER) responsible for repair of lesions that give rise to abasic (AP) sites in DNA. Also contributes to DNA double-strand break repair by non-homologous end joining and homologous recombination. Has both template-dependent and template-independent (terminal transferase) DNA polymerase activities. Also has a 5'-deoxyribose-5-phosphate lyase (dRP lyase) activity. The protein is DNA polymerase lambda of Macaca fascicularis (Crab-eating macaque).